The chain runs to 122 residues: Large ribosomal subunit protein uL14c (122 aa).

The protein belongs to the universal ribosomal protein uL14 family. Part of the 50S ribosomal subunit.

Its subcellular location is the plastid. The protein resides in the chloroplast. Functionally, binds to 23S rRNA. This Guizotia abyssinica (Niger) protein is Large ribosomal subunit protein uL14c.